We begin with the raw amino-acid sequence, 400 residues long: CCA-adding enzyme (400 aa).

Positions 28 and 31 each coordinate ATP. Positions 28 and 31 each coordinate CTP. D41 and D43 together coordinate Mg(2+). Residues R112, D155, R158, R161, and R164 each coordinate ATP. Positions 112, 155, 158, 161, and 164 each coordinate CTP.

The protein belongs to the tRNA nucleotidyltransferase/poly(A) polymerase family. Bacterial CCA-adding enzyme type 3 subfamily. In terms of assembly, homodimer. Requires Mg(2+) as cofactor.

It carries out the reaction a tRNA precursor + 2 CTP + ATP = a tRNA with a 3' CCA end + 3 diphosphate. The catalysed reaction is a tRNA with a 3' CCA end + 2 CTP + ATP = a tRNA with a 3' CCACCA end + 3 diphosphate. Catalyzes the addition and repair of the essential 3'-terminal CCA sequence in tRNAs without using a nucleic acid template. Adds these three nucleotides in the order of C, C, and A to the tRNA nucleotide-73, using CTP and ATP as substrates and producing inorganic pyrophosphate. tRNA 3'-terminal CCA addition is required both for tRNA processing and repair. Also involved in tRNA surveillance by mediating tandem CCA addition to generate a CCACCA at the 3' terminus of unstable tRNAs. While stable tRNAs receive only 3'-terminal CCA, unstable tRNAs are marked with CCACCA and rapidly degraded. The polypeptide is CCA-adding enzyme (Staphylococcus aureus (strain MRSA252)).